Consider the following 364-residue polypeptide: tRNA 2-selenouridine synthase (364 aa).

One can recognise a Rhodanese domain in the interval 14–137 (LLADTPLIDV…LRQTAIQATW (124 aa)). The active-site S-selanylcysteine intermediate is Cys-97.

It belongs to the SelU family. As to quaternary structure, monomer.

The catalysed reaction is 5-methylaminomethyl-2-thiouridine(34) in tRNA + selenophosphate + (2E)-geranyl diphosphate + H2O + H(+) = 5-methylaminomethyl-2-selenouridine(34) in tRNA + (2E)-thiogeraniol + phosphate + diphosphate. The enzyme catalyses 5-methylaminomethyl-2-thiouridine(34) in tRNA + (2E)-geranyl diphosphate = 5-methylaminomethyl-S-(2E)-geranyl-thiouridine(34) in tRNA + diphosphate. It carries out the reaction 5-methylaminomethyl-S-(2E)-geranyl-thiouridine(34) in tRNA + selenophosphate + H(+) = 5-methylaminomethyl-2-(Se-phospho)selenouridine(34) in tRNA + (2E)-thiogeraniol. It catalyses the reaction 5-methylaminomethyl-2-(Se-phospho)selenouridine(34) in tRNA + H2O = 5-methylaminomethyl-2-selenouridine(34) in tRNA + phosphate. Involved in the post-transcriptional modification of the uridine at the wobble position (U34) of tRNA(Lys), tRNA(Glu) and tRNA(Gln). Catalyzes the conversion of 2-thiouridine (S2U-RNA) to 2-selenouridine (Se2U-RNA). Acts in a two-step process involving geranylation of 2-thiouridine (S2U) to S-geranyl-2-thiouridine (geS2U) and subsequent selenation of the latter derivative to 2-selenouridine (Se2U) in the tRNA chain. The chain is tRNA 2-selenouridine synthase from Salmonella paratyphi A (strain ATCC 9150 / SARB42).